We begin with the raw amino-acid sequence, 535 residues long: Protein translocase subunit SecD (535 aa).

A run of 6 helical transmembrane segments spans residues 5 to 25 (LTWKVVVIVAVLLVFAFGIIG), 377 to 397 (AIIGFVAVIIFMLIYYKGAGI), 402 to 421 (SLLLNLVILLGFMGYFGAVL), 425 to 444 (GIAGVILTVGMGVDSNVLIF), 469 to 489 (WLTIIDTHVTTIVSAIILFLF), and 496 to 516 (GFAVTLSFGLFANLFTAVFVS).

Belongs to the SecD/SecF family. SecD subfamily. Forms a complex with SecF. Part of the essential Sec protein translocation apparatus which comprises SecA, SecYEG and auxiliary proteins SecDF. Other proteins may also be involved.

The protein resides in the cell inner membrane. Functionally, part of the Sec protein translocase complex. Interacts with the SecYEG preprotein conducting channel. SecDF uses the proton motive force (PMF) to complete protein translocation after the ATP-dependent function of SecA. The protein is Protein translocase subunit SecD of Koribacter versatilis (strain Ellin345).